The chain runs to 510 residues: Maturase K (510 aa).

This sequence belongs to the intron maturase 2 family. MatK subfamily.

It localises to the plastid. The protein localises to the chloroplast. Usually encoded in the trnK tRNA gene intron. Probably assists in splicing its own and other chloroplast group II introns. The protein is Maturase K of Cestrum elegans (Red cestrum).